Here is a 37-residue protein sequence, read N- to C-terminus: Large ribosomal subunit protein bL36c (37 aa).

The protein belongs to the bacterial ribosomal protein bL36 family.

Its subcellular location is the plastid. The chain is Large ribosomal subunit protein bL36c from Cuscuta exaltata (Tall dodder).